Consider the following 214-residue polypeptide: Adenylate kinase (214 aa).

10-15 lines the ATP pocket; it reads GAGKGT. Residues 30–59 are NMP; it reads STGDMLRAAIKAGTELGLNAKAVMDAGQLV. AMP contacts are provided by residues Thr-31, Arg-36, 57-59, 85-88, and Gln-92; these read QLV and GFPR. The LID stretch occupies residues 122-159; that stretch reads GRRVHSGSGRTYHVVFNPPKVEGKDDVTGEDLVIRADD. ATP-binding positions include Arg-123 and 132–133; that span reads TY. Arg-156 and Arg-167 together coordinate AMP. ATP is bound at residue Gln-200.

This sequence belongs to the adenylate kinase family. As to quaternary structure, monomer.

It localises to the cytoplasm. It carries out the reaction AMP + ATP = 2 ADP. Its pathway is purine metabolism; AMP biosynthesis via salvage pathway; AMP from ADP: step 1/1. In terms of biological role, catalyzes the reversible transfer of the terminal phosphate group between ATP and AMP. Plays an important role in cellular energy homeostasis and in adenine nucleotide metabolism. The sequence is that of Adenylate kinase from Aeromonas salmonicida (strain A449).